A 340-amino-acid polypeptide reads, in one-letter code: GTP 3',8-cyclase (340 aa).

Residues 8-229 form the Radical SAM core domain; that stretch reads KLGRPIRDLR…IEQHFEISPV (222 aa). GTP is bound at residue R17. Residues C24 and C28 each contribute to the [4Fe-4S] cluster site. S-adenosyl-L-methionine is bound at residue Y30. C31 is a [4Fe-4S] cluster binding site. R71 contributes to the GTP binding site. G75 contributes to the S-adenosyl-L-methionine binding site. T102 is a binding site for GTP. Residue S126 coordinates S-adenosyl-L-methionine. Residue K163 coordinates GTP. M197 is an S-adenosyl-L-methionine binding site. [4Fe-4S] cluster contacts are provided by C261 and C264. A GTP-binding site is contributed by 266 to 268; that stretch reads RAR. C278 contacts [4Fe-4S] cluster.

Belongs to the radical SAM superfamily. MoaA family. In terms of assembly, monomer and homodimer. The cofactor is [4Fe-4S] cluster.

The enzyme catalyses GTP + AH2 + S-adenosyl-L-methionine = (8S)-3',8-cyclo-7,8-dihydroguanosine 5'-triphosphate + 5'-deoxyadenosine + L-methionine + A + H(+). It participates in cofactor biosynthesis; molybdopterin biosynthesis. Catalyzes the cyclization of GTP to (8S)-3',8-cyclo-7,8-dihydroguanosine 5'-triphosphate. This chain is GTP 3',8-cyclase, found in Staphylococcus epidermidis (strain ATCC 35984 / DSM 28319 / BCRC 17069 / CCUG 31568 / BM 3577 / RP62A).